We begin with the raw amino-acid sequence, 689 residues long: MARQYPLKKTRNIGIMAHIDAGKTTTTERILYYTGRVHKMGEVHDGAAVMDWMEQEQERGITITSAATTCEWQKHRINIIDTPGHVDFTVEVERSLRVLDGAIALFCAVGGVEPQSETVWRQADKYQVPRIAFVNKMDRMGADFFHVIEMMEDRLGANAVPLQIPIGSEDDFEGIVDLVTMDAVVYKDDLGVKYERVDIPEDYREQAEEYRENLLEAISELDDEIMMKYLEGEEITTDELKTALRKGVLDVEIVPVLCGSAFKNKGVQLLLDAVIDYLPSPVDVPPVEGMNPDTEEEEIRKAGDDEPFSALAFKIMADPYVGKLTFFRVYSGVLEAGSYVYNSTKGHKERIGRILQMHANHREERESVHAGDLAAAVGLKNTATGDTLCDEDHPIVLESMEFPEPVISVAIEPKSQAEQDKLSLALQRLAEEDPTFKVRTDEETGQTIIRGMGELHLEVIVDRLLREFKVDANIGRPQVAYRETITRKVTDVEGKFIRQSGGRGQYGHVIIDIEPLEEGEGFEFVNKIVGGAIPKEYIPAVEDGIVEAMENGVLAGYPAVDLKITLKDGSYHEVDSSEMAFKIAGSIAFKEGAQKASPVILEPIMDVEVVVPEEYMGDVIGDLNGRRGNVQGMERRASAQVVKAYVPLAEMFGYATDLRSKTQGRATYTMQFSHYEPVPDNIAKEIIGK.

The 275-residue stretch at 8–282 folds into the tr-type G domain; the sequence is KKTRNIGIMA…AVIDYLPSPV (275 aa). GTP-binding positions include 17–24, 81–85, and 135–138; these read AHIDAGKT, DTPGH, and NKMD.

The protein belongs to the TRAFAC class translation factor GTPase superfamily. Classic translation factor GTPase family. EF-G/EF-2 subfamily.

The protein localises to the cytoplasm. Functionally, catalyzes the GTP-dependent ribosomal translocation step during translation elongation. During this step, the ribosome changes from the pre-translocational (PRE) to the post-translocational (POST) state as the newly formed A-site-bound peptidyl-tRNA and P-site-bound deacylated tRNA move to the P and E sites, respectively. Catalyzes the coordinated movement of the two tRNA molecules, the mRNA and conformational changes in the ribosome. The chain is Elongation factor G from Halothermothrix orenii (strain H 168 / OCM 544 / DSM 9562).